The primary structure comprises 128 residues: Ribonuclease pancreatic (128 aa).

Residues 1–23 form a disordered region; sequence AESSAMKFQRQHVDSEGSSSSNA. Positions 7 and 10 each coordinate substrate. His-12 acts as the Proton acceptor in catalysis. 4 cysteine pairs are disulfide-bonded: Cys-26–Cys-84, Cys-40–Cys-95, Cys-58–Cys-110, and Cys-65–Cys-72. Residues 41-45, Lys-66, and Arg-85 contribute to the substrate site; that span reads KPVNT. The active-site Proton donor is the His-119.

This sequence belongs to the pancreatic ribonuclease family. In terms of assembly, monomer. Interacts with and forms tight 1:1 complexes with RNH1. Dimerization of two such complexes may occur. Interaction with RNH1 inhibits this protein. Pancreas.

Its subcellular location is the secreted. The enzyme catalyses an [RNA] containing cytidine + H2O = an [RNA]-3'-cytidine-3'-phosphate + a 5'-hydroxy-ribonucleotide-3'-[RNA].. It carries out the reaction an [RNA] containing uridine + H2O = an [RNA]-3'-uridine-3'-phosphate + a 5'-hydroxy-ribonucleotide-3'-[RNA].. Functionally, endonuclease that catalyzes the cleavage of RNA on the 3' side of pyrimidine nucleotides. Acts on single-stranded and double-stranded RNA. This Hydrochoerus hydrochaeris (Capybara) protein is Ribonuclease pancreatic (RNASE1).